The primary structure comprises 89 residues: Prostaglandin E2 receptor EP3 subtype (89 aa).

A helical membrane pass occupies residues 1-18 (GVWLAVLAFALLPVLGVG). The Extracellular segment spans residues 19–48 (QYTIQWPGTWCFISTGPGGNGTNSRQNWGN). N-linked (GlcNAc...) asparagine glycosylation is present at asparagine 38. A helical membrane pass occupies residues 49 to 74 (VFFASDFAILGLSALVVTFACNLATI). Over 75 to 89 (KALVSRCRAKATASQ) the chain is Cytoplasmic.

Belongs to the G-protein coupled receptor 1 family. Interacts (via C-terminus) with MKLN1.

The protein localises to the cell membrane. Receptor for prostaglandin E2 (PGE2). Required for normal development of fever in response to pyrinogens, including IL1B, prostaglandin E2 and bacterial lipopolysaccharide (LPS). Required for normal potentiation of platelet aggregation by prostaglandin E2, and thus plays a role in the regulation of blood coagulation. Required for increased HCO3(-) secretion in the duodenum in response to mucosal acidification, and thereby contributes to the protection of the mucosa against acid-induced ulceration. Not required for normal kidney function, normal urine volume and osmolality. This Ovis aries (Sheep) protein is Prostaglandin E2 receptor EP3 subtype (PTGER3).